Consider the following 370-residue polypeptide: Probable aspartic-type endopeptidase ARB_04018 (370 aa).

An N-terminal signal peptide occupies residues 1 to 21 (MWHSPFSTAFTLFLGFFTLTL). N-linked (GlcNAc...) asparagine glycosylation is found at Asn80 and Asn102. Positions 94–367 (FVNEITIGND…DHDGPKMGFA (274 aa)) constitute a Peptidase A1 domain. Asp110 is an active-site residue. Asn251 is a glycosylation site (N-linked (GlcNAc...) asparagine). Asp261 is a catalytic residue. Asn298 carries N-linked (GlcNAc...) asparagine glycosylation.

Belongs to the peptidase A1 family.

Its subcellular location is the secreted. In terms of biological role, probable aspartic-type endopeptidase which contributes to virulence. This chain is Probable aspartic-type endopeptidase ARB_04018, found in Arthroderma benhamiae (strain ATCC MYA-4681 / CBS 112371) (Trichophyton mentagrophytes).